Consider the following 236-residue polypeptide: 7-cyano-7-deazaguanine synthase (236 aa).

Residue phenylalanine 12–leucine 22 coordinates ATP. Residues cysteine 200, cysteine 215, cysteine 218, and cysteine 221 each contribute to the Zn(2+) site.

It belongs to the QueC family. It depends on Zn(2+) as a cofactor.

It catalyses the reaction 7-carboxy-7-deazaguanine + NH4(+) + ATP = 7-cyano-7-deazaguanine + ADP + phosphate + H2O + H(+). The protein operates within purine metabolism; 7-cyano-7-deazaguanine biosynthesis. In terms of biological role, catalyzes the ATP-dependent conversion of 7-carboxy-7-deazaguanine (CDG) to 7-cyano-7-deazaguanine (preQ(0)). This Bradyrhizobium sp. (strain ORS 278) protein is 7-cyano-7-deazaguanine synthase.